The chain runs to 260 residues: uncharacterized protein (260 aa).

It belongs to the MG032/MG096/MG288 family.

This is an uncharacterized protein from Mycoplasma pneumoniae (strain ATCC 29342 / M129 / Subtype 1) (Mycoplasmoides pneumoniae).